The primary structure comprises 296 residues: Ribose import binding protein RbsB (296 aa).

Positions 1–25 are cleaved as a signal peptide; sequence MNMKKLATLVSAVALSATVSANAMA.

Belongs to the bacterial solute-binding protein 2 family. As to quaternary structure, the complex is composed of an ATP-binding protein (RbsA), two transmembrane proteins (RbsC) and a solute-binding protein (RbsB).

It is found in the periplasm. In terms of biological role, part of the ABC transporter complex RbsABC involved in ribose import. Binds ribose. This Salmonella typhi protein is Ribose import binding protein RbsB (rbsB).